The primary structure comprises 137 residues: Acidic phospholipase A2 PL-I (137 aa).

The first 17 residues, 1–17 (AVCVSLLGASSIRPLPL), serve as a signal peptide directing secretion. Cystine bridges form between Cys28–Cys89, Cys44–Cys136, Cys46–Cys62, Cys61–Cys117, Cys68–Cys110, Cys78–Cys103, and Cys96–Cys108. Ca(2+) is bound by residues Tyr45, Gly47, and Gly49. His65 is a catalytic residue. Asp66 is a Ca(2+) binding site. The active site involves Asp111.

It depends on Ca(2+) as a cofactor. As to expression, expressed by the venom gland.

Its subcellular location is the secreted. The enzyme catalyses a 1,2-diacyl-sn-glycero-3-phosphocholine + H2O = a 1-acyl-sn-glycero-3-phosphocholine + a fatty acid + H(+). Snake venom phospholipase A2 (PLA2) that may act in the hemostasis system of the prey. Exhibits hydrolytic activities, and prefers the anionic micelles (dPPC with deoxycholate) (793 umol/mg/min) to the zwitterionic micelles (dPPC with Triton X-100) (591 umol/mg/min). PLA2 catalyzes the calcium-dependent hydrolysis of the 2-acyl groups in 3-sn-phosphoglycerides. The sequence is that of Acidic phospholipase A2 PL-I from Walterinnesia aegyptia (Desert black snake).